A 125-amino-acid chain; its full sequence is Small ribosomal subunit protein bS6 (125 aa).

The tract at residues 96–125 (VTAPSPMMREEKAKSAPQPAEEAKETTLAT) is disordered. Basic and acidic residues predominate over residues 116–125 (EEAKETTLAT).

Belongs to the bacterial ribosomal protein bS6 family.

In terms of biological role, binds together with bS18 to 16S ribosomal RNA. The protein is Small ribosomal subunit protein bS6 of Nitrosospira multiformis (strain ATCC 25196 / NCIMB 11849 / C 71).